A 66-amino-acid chain; its full sequence is MAMVKIKDGESFESAFRKFKKSCEKAGILSEVKKRENFEKPSVRLKKKSIAARKRAVKKSRKGWND.

Belongs to the bacterial ribosomal protein bS21 family.

In Bdellovibrio bacteriovorus (strain ATCC 15356 / DSM 50701 / NCIMB 9529 / HD100), this protein is Small ribosomal subunit protein bS21.